The chain runs to 291 residues: Pyridoxal kinase PdxY (291 aa).

Residues S9 and 44 to 45 (TQ) contribute to the substrate site. ATP contacts are provided by residues D112, V144, E149, K182, and 207–210 (RPHL). D221 contributes to the substrate binding site.

Belongs to the pyridoxine kinase family. PdxY subfamily. Homodimer. Mg(2+) serves as cofactor.

It carries out the reaction pyridoxal + ATP = pyridoxal 5'-phosphate + ADP + H(+). It participates in cofactor metabolism; pyridoxal 5'-phosphate salvage; pyridoxal 5'-phosphate from pyridoxal: step 1/1. Its function is as follows. Pyridoxal kinase involved in the salvage pathway of pyridoxal 5'-phosphate (PLP). Catalyzes the phosphorylation of pyridoxal to PLP. The polypeptide is Pyridoxal kinase PdxY (Photobacterium profundum (strain SS9)).